Reading from the N-terminus, the 199-residue chain is Recombination protein RecR (199 aa).

The C4-type zinc-finger motif lies at 58 to 73; the sequence is CQTCRILSETDLCSLC. A Toprim domain is found at 81–176; the sequence is GQLCVVEMPS…TTTRIAHGVP (96 aa).

The protein belongs to the RecR family.

Its function is as follows. May play a role in DNA repair. It seems to be involved in an RecBC-independent recombinational process of DNA repair. It may act with RecF and RecO. The protein is Recombination protein RecR of Nitrosococcus oceani (strain ATCC 19707 / BCRC 17464 / JCM 30415 / NCIMB 11848 / C-107).